The primary structure comprises 337 residues: Anthranilate phosphoribosyltransferase (337 aa).

5-phospho-alpha-D-ribose 1-diphosphate is bound by residues Gly-81, 84 to 85 (GD), Thr-89, 91 to 94 (NIST), 109 to 117 (KHGNRALSS), and Thr-121. Residue Gly-81 coordinates anthranilate. Residue Ser-93 participates in Mg(2+) binding. Asn-112 serves as a coordination point for anthranilate. Arg-167 serves as a coordination point for anthranilate. Asp-225 and Glu-226 together coordinate Mg(2+).

Belongs to the anthranilate phosphoribosyltransferase family. Homodimer. Mg(2+) serves as cofactor.

It catalyses the reaction N-(5-phospho-beta-D-ribosyl)anthranilate + diphosphate = 5-phospho-alpha-D-ribose 1-diphosphate + anthranilate. It participates in amino-acid biosynthesis; L-tryptophan biosynthesis; L-tryptophan from chorismate: step 2/5. In terms of biological role, catalyzes the transfer of the phosphoribosyl group of 5-phosphorylribose-1-pyrophosphate (PRPP) to anthranilate to yield N-(5'-phosphoribosyl)-anthranilate (PRA). In Rhizobium meliloti (strain 1021) (Ensifer meliloti), this protein is Anthranilate phosphoribosyltransferase.